The sequence spans 579 residues: DELLA protein RGA2 (579 aa).

The interval Met-1–Lys-31 is disordered. Positions Asp-45–Ala-49 match the DELLA motif motif. 2 stretches are compositionally biased toward low complexity: residues Ser-149–Ser-162 and Ser-174–Thr-183. Positions Ser-149–Thr-183 are disordered. The GRAS domain maps to Val-205–Lys-574. The tract at residues Val-212–Ile-266 is leucine repeat I (LRI). The interval Gln-285–Gly-350 is VHIID. A VHIID motif is present at residues Val-316 to Asp-320. Residues Glu-364 to Ser-396 are leucine repeat II (LRII). Positions Val-408 to Asn-495 are PFYRE. The short motif at Leu-416–Leu-420 is the LXXLL motif element. The SAW stretch occupies residues Ala-498 to Lys-574.

Belongs to the GRAS family. DELLA subfamily. Post-translationally, phosphorylated. In terms of processing, ubiquitinated. Upon GA application it is ubiquitinated, leading to its subsequent degradation.

Its subcellular location is the nucleus. Probable transcriptional regulator that acts as a repressor of the gibberellin (GA) signaling pathway. Probably acts by participating in large multiprotein complexes that represses transcription of GA-inducible genes. Upon GA application, it is degraded by the proteasome, allowing the GA signaling pathway. This Brassica campestris (Field mustard) protein is DELLA protein RGA2 (RGA2).